Reading from the N-terminus, the 86-residue chain is Protein Tat (86 aa).

Residues 1 to 21 (MDPVDPNLEPWNHPGSQPKTA) are disordered. The interaction with human CREBBP stretch occupies residues 1-24 (MDPVDPNLEPWNHPGSQPKTACNR). Residues 1–48 (MDPVDPNLEPWNHPGSQPKTACNRCHCKKCCYHCQVCFITKGLGISYG) form a transactivation region. The Zn(2+) site is built by Cys22, Cys25, and Cys27. Residues 22-37 (CNRCHCKKCCYHCQVC) are cysteine-rich. Residue Lys28 is modified to N6-acetyllysine; by host PCAF. Cys30, His33, Cys34, and Cys37 together coordinate Zn(2+). The segment at 38-48 (FITKGLGISYG) is core. The disordered stretch occupies residues 47–86 (YGRKKRRQRRRPSQGGQTHQDPIPKQPSSQPRGNPTGPKE). Basic residues predominate over residues 48-58 (GRKKRRQRRRP). Residues 49–57 (RKKRRQRRR) carry the Nuclear localization signal, RNA-binding (TAR), and protein transduction motif. The segment at 49–86 (RKKRRQRRRPSQGGQTHQDPIPKQPSSQPRGNPTGPKE) is interaction with the host capping enzyme RNGTT. Residues Lys50 and Lys51 each carry the N6-acetyllysine; by host EP300 and GCN5L2 modification. Residues Arg52 and Arg53 each carry the asymmetric dimethylarginine; by host PRMT6 modification. Residues 60 to 79 (QGGQTHQDPIPKQPSSQPRG) show a composition bias toward polar residues. Residue Lys71 forms a Glycyl lysine isopeptide (Lys-Gly) (interchain with G-Cter in ubiquitin) linkage.

The protein belongs to the lentiviruses Tat family. Interacts with host CCNT1. Associates with the P-TEFb complex composed at least of Tat, P-TEFb (CDK9 and CCNT1), TAR RNA, RNA Pol II. Recruits the HATs CREBBP, TAF1/TFIID, EP300, PCAF and GCN5L2. Interacts with host KAT5/Tip60; this interaction targets the latter to degradation. Interacts with the host deacetylase SIRT1. Interacts with host capping enzyme RNGTT; this interaction stimulates RNGTT. Binds to host KDR, and to the host integrins ITGAV/ITGB3 and ITGA5/ITGB1. Interacts with host KPNB1/importin beta-1 without previous binding to KPNA1/importin alpha-1. Interacts with EIF2AK2. Interacts with host nucleosome assembly protein NAP1L1; this interaction may be required for the transport of Tat within the nucleus, since the two proteins interact at the nuclear rim. Interacts with host C1QBP/SF2P32; this interaction involves lysine-acetylated Tat. Interacts with the host chemokine receptors CCR2, CCR3 and CXCR4. Interacts with host DPP4/CD26; this interaction may trigger an anti-proliferative effect. Interacts with host LDLR. Interacts with the host extracellular matrix metalloproteinase MMP1. Interacts with host PRMT6; this interaction mediates Tat's methylation. Interacts with, and is ubiquitinated by MDM2/Hdm2. Interacts with host PSMC3 and HTATIP2. Interacts with STAB1; this interaction may overcome SATB1-mediated repression of IL2 and IL2RA (interleukin) in T cells by binding to the same domain than HDAC1. Interacts (when acetylated) with human CDK13, thereby increasing HIV-1 mRNA splicing and promoting the production of the doubly spliced HIV-1 protein Nef. Interacts with host TBP; this interaction modulates the activity of transcriptional pre-initiation complex. Interacts with host RELA. Interacts with host PLSCR1; this interaction negatively regulates Tat transactivation activity by altering its subcellular distribution. Post-translationally, asymmetrical arginine methylation by host PRMT6 seems to diminish the transactivation capacity of Tat and affects the interaction with host CCNT1. Acetylation by EP300, CREBBP, GCN5L2/GCN5 and PCAF regulates the transactivation activity of Tat. EP300-mediated acetylation of Lys-50 promotes dissociation of Tat from the TAR RNA through the competitive binding to PCAF's bromodomain. In addition, the non-acetylated Tat's N-terminus can also interact with PCAF. PCAF-mediated acetylation of Lys-28 enhances Tat's binding to CCNT1. Lys-50 is deacetylated by SIRT1. In terms of processing, polyubiquitination by host MDM2 does not target Tat to degradation, but activates its transactivation function and fosters interaction with CCNT1 and TAR RNA. Post-translationally, phosphorylated by EIF2AK2 on serine and threonine residues adjacent to the basic region important for TAR RNA binding and function. Phosphorylation of Tat by EIF2AK2 is dependent on the prior activation of EIF2AK2 by dsRNA.

It is found in the host nucleus. The protein localises to the host nucleolus. It localises to the host cytoplasm. Its subcellular location is the secreted. Functionally, transcriptional activator that increases RNA Pol II processivity, thereby increasing the level of full-length viral transcripts. Recognizes a hairpin structure at the 5'-LTR of the nascent viral mRNAs referred to as the transactivation responsive RNA element (TAR) and recruits the cyclin T1-CDK9 complex (P-TEFb complex) that will in turn hyperphosphorylate the RNA polymerase II to allow efficient elongation. The CDK9 component of P-TEFb and other Tat-activated kinases hyperphosphorylate the C-terminus of RNA Pol II that becomes stabilized and much more processive. Other factors such as HTATSF1/Tat-SF1, SUPT5H/SPT5, and HTATIP2 are also important for Tat's function. Besides its effect on RNA Pol II processivity, Tat induces chromatin remodeling of proviral genes by recruiting the histone acetyltransferases (HATs) CREBBP, EP300 and PCAF to the chromatin. This also contributes to the increase in proviral transcription rate, especially when the provirus integrates in transcriptionally silent region of the host genome. To ensure maximal activation of the LTR, Tat mediates nuclear translocation of NF-kappa-B by interacting with host RELA. Through its interaction with host TBP, Tat may also modulate transcription initiation. Tat can reactivate a latently infected cell by penetrating in it and transactivating its LTR promoter. In the cytoplasm, Tat is thought to act as a translational activator of HIV-1 mRNAs. In terms of biological role, extracellular circulating Tat can be endocytosed by surrounding uninfected cells via the binding to several surface receptors such as CD26, CXCR4, heparan sulfate proteoglycans (HSPG) or LDLR. Neurons are rarely infected, but they internalize Tat via their LDLR. Through its interaction with nuclear HATs, Tat is potentially able to control the acetylation-dependent cellular gene expression. Modulates the expression of many cellular genes involved in cell survival, proliferation or in coding for cytokines or cytokine receptors. Tat plays a role in T-cell and neurons apoptosis. Tat induced neurotoxicity and apoptosis probably contribute to neuroAIDS. Circulating Tat also acts as a chemokine-like and/or growth factor-like molecule that binds to specific receptors on the surface of the cells, affecting many cellular pathways. In the vascular system, Tat binds to ITGAV/ITGB3 and ITGA5/ITGB1 integrins dimers at the surface of endothelial cells and competes with bFGF for heparin-binding sites, leading to an excess of soluble bFGF. This Homo sapiens (Human) protein is Protein Tat.